The following is a 146-amino-acid chain: Putative actin-depolymerizing factor 8 (146 aa).

The region spanning 14–144 is the ADF-H domain; it reads PAWIEVPEKS…DLEVLRGRAN (131 aa).

Belongs to the actin-binding proteins ADF family.

Functionally, actin-depolymerizing protein. Severs actin filaments (F-actin) and binds to actin monomers. This chain is Putative actin-depolymerizing factor 8 (ADF8), found in Oryza sativa subsp. japonica (Rice).